The chain runs to 334 residues: Leucine-rich repeat-containing protein 26 (334 aa).

The signal sequence occupies residues 1-30; the sequence is MRGSFFSRLPPQLSLLLLLLLLLSWRRVWT. Topologically, residues 31-265 are extracellular; that stretch reads QEHIGTDPSK…QCTQSLAARD (235 aa). Residues 38 to 75 enclose the LRRNT domain; the sequence is PSKSPVAPVCPEACSCSPGGKANCSALALPAVPAGLSW. Cystine bridges form between C47-C53 and C51-C61. 5 LRR repeats span residues 76-97, 100-121, 124-145, 148-169, and 172-194; these read QVRS…AFAD, ALLY…AFWG, VLQR…TFTP, ALSF…ILGP, and LLRV…LNSL. One can recognise an LRRCT domain in the interval 205-259; the sequence is NPWACSCALRPLCTWLRKHPRPTSETETLLCVSPKLQTLNLLTDFPDNAFKQCTQ. 2 disulfide bridges follow: C209-C235 and C211-C257. The chain crosses the membrane as a helical span at residues 266 to 286; sequence LAVVYALGPASFLASLAICLA. At 287 to 334 the chain is on the cytoplasmic side; that stretch reads LGSVLTACGARRRRRRTTVRHLIRRQPDPEGPASLEDVGSPTTTAIQA. Positions 312-334 are disordered; the sequence is QPDPEGPASLEDVGSPTTTAIQA.

Interacts with KCNMA1.

It localises to the cell membrane. Its subcellular location is the cytoplasm. The protein resides in the cytoskeleton. Auxiliary protein of the large-conductance, voltage and calcium-activated potassium channel (BK alpha). Required for the conversion of BK alpha channels from a high-voltage to a low-voltage activated channel type in non-excitable cells. These are characterized by negative membrane voltages and constant low levels of calcium. The chain is Leucine-rich repeat-containing protein 26 (Lrrc26) from Rattus norvegicus (Rat).